The chain runs to 304 residues: Aspartate carbamoyltransferase catalytic subunit (304 aa).

Carbamoyl phosphate contacts are provided by arginine 49 and threonine 50. L-aspartate is bound at residue lysine 77. Residues arginine 99, histidine 127, and glutamine 130 each contribute to the carbamoyl phosphate site. L-aspartate-binding residues include arginine 160 and arginine 211. Carbamoyl phosphate contacts are provided by alanine 252 and proline 253.

Belongs to the aspartate/ornithine carbamoyltransferase superfamily. ATCase family. In terms of assembly, heterododecamer (2C3:3R2) of six catalytic PyrB chains organized as two trimers (C3), and six regulatory PyrI chains organized as three dimers (R2).

It catalyses the reaction carbamoyl phosphate + L-aspartate = N-carbamoyl-L-aspartate + phosphate + H(+). The protein operates within pyrimidine metabolism; UMP biosynthesis via de novo pathway; (S)-dihydroorotate from bicarbonate: step 2/3. Functionally, catalyzes the condensation of carbamoyl phosphate and aspartate to form carbamoyl aspartate and inorganic phosphate, the committed step in the de novo pyrimidine nucleotide biosynthesis pathway. The protein is Aspartate carbamoyltransferase catalytic subunit of Bacillus cereus (strain G9842).